The following is a 557-amino-acid chain: Pectinesterase/pectinesterase inhibitor 18 (557 aa).

Residues 1–34 (MSNSNQPLLSKPKSLKHKNLCLVLSFVAILGSVA) form the signal peptide. Residues 47 to 203 (NNDDSLLTTS…VSRARVALAI (157 aa)) form a pectinesterase inhibitor 18 region. Positions 246–543 (NVVVAKDGTG…FTVAKLIQGG (298 aa)) are pectinesterase 18. The substrate site is built by Thr-321 and Gln-351. The active-site Proton donor; for pectinesterase activity is Asp-374. Asp-395 serves as the catalytic Nucleophile; for pectinesterase activity. Substrate is bound by residues Arg-463 and Trp-465.

In the N-terminal section; belongs to the PMEI family. The protein in the C-terminal section; belongs to the pectinesterase family. As to expression, expressed in siliques, flowers, floral stems, rosette leaves and roots.

The protein localises to the secreted. Its subcellular location is the cell wall. It catalyses the reaction [(1-&gt;4)-alpha-D-galacturonosyl methyl ester](n) + n H2O = [(1-&gt;4)-alpha-D-galacturonosyl](n) + n methanol + n H(+). It carries out the reaction Endohydrolysis of the N-glycosidic bond at one specific adenosine on the 28S rRNA.. Its pathway is glycan metabolism; pectin degradation; 2-dehydro-3-deoxy-D-gluconate from pectin: step 1/5. Functionally, acts in the modification of cell walls via demethylesterification of cell wall pectin. Inhibits the elongation phase of protein synthesis. The polypeptide is Pectinesterase/pectinesterase inhibitor 18 (PME18) (Arabidopsis thaliana (Mouse-ear cress)).